We begin with the raw amino-acid sequence, 161 residues long: Nucleotide-binding protein Sden_0770 (161 aa).

This sequence belongs to the YajQ family.

Functionally, nucleotide-binding protein. The sequence is that of Nucleotide-binding protein Sden_0770 from Shewanella denitrificans (strain OS217 / ATCC BAA-1090 / DSM 15013).